A 317-amino-acid chain; its full sequence is Ribosomal protein L11 methyltransferase (317 aa).

Residues Thr158, Gly179, Asp201, and Asn244 each coordinate S-adenosyl-L-methionine.

The protein belongs to the methyltransferase superfamily. PrmA family.

The protein resides in the cytoplasm. The enzyme catalyses L-lysyl-[protein] + 3 S-adenosyl-L-methionine = N(6),N(6),N(6)-trimethyl-L-lysyl-[protein] + 3 S-adenosyl-L-homocysteine + 3 H(+). Functionally, methylates ribosomal protein L11. The protein is Ribosomal protein L11 methyltransferase of Streptococcus pyogenes serotype M1.